The primary structure comprises 951 residues: MDEENMTKSEEQQPLSLQKALQQCELVQNMIDLSISNLEGLRTKCAASNDLTQKEIRTLESKLVKYFSRQLSCKKKVALQERNAELDGFPQLRHWFRIVDVRKEVLEEISPDQLSLEDLLEMTDEQVCETVEKYGANQEECARLNASLSCLRNVHKSGGNLSKQDWIIQWPTTEPGQESNPVCPPEPSPWIRTHLSQSPRVQTKCPQHFCPTSPTPGTPVYTQVDRLTVDAYPNLCPPPPPLESGHRSLPPSPRQRHVVRTPPRTPNIVTTVTPPGTPPMRRKNKLKPPGTPPPSSRKLIHLIPGFTALHRSKSHEFQLGNRVDEANTPKAKKKSKPLNLKIHSGVGSCENIPAQQRSPLLSERSLRSFFVGHGPFLPSTPPVHTEANFSANTLSVPRWSPQIPRRDLGNSIKHRFSTKYWMSQTCTVCGKGMLFGLKCKNCKLKCHNKCTKEAPPCHLLIIHRGDPARLVRTESVPCDINNPVRKPARYSDLHISQTLPKTNKINKDHIPVPYQPDSSSNPSSTTSSTPSSPAPPLPPSATPPSPLHPSPQCPRQKKNFNLPASHYYKYKQQFIFPDVVPVPETPTRAPQVILHPVTSNTILEGNPLLQIEVEPTSENEESHNEAEESEDEFEEMNLSLLSARSFPRKASQTSIFLQEWDIPFEQLEIGELIGKGRFGQVYHGRWHGEVAIRLIDIERDNEDQLKAFKREVMAYRQTRHENVVLFMGACMSPPHLAIITSLCKGRTLYSVVRDAKIVLDVNKTRQIAQEIVKGMGYLHAKGILHKDLKSKNVFYDNGKVVITDFGLFSISGVLQAGRRDDKLRIQNGWLCHLAPEIIRQLSPDTEEDKLPFSKHSDVFALGTIWYELHAREWPFKTQPAEAIIWQMGTGMKPNLSQIGMGKEISDILLFCWAFEQEERPTFTKLMDMLEKLPKRNRRLSHPGHFWKSAEL.

The tract at residues Pro-237–Lys-298 is disordered. The span at Arg-260–Pro-274 shows a compositional bias: low complexity. A phosphothreonine mark is found at Thr-273 and Thr-277. Residues Lys-413–Cys-457 form a Phorbol-ester/DAG-type zinc finger. 8 residues coordinate Zn(2+): His-414, Cys-426, Cys-429, Cys-439, Cys-442, His-447, Cys-450, and Cys-457. Position 475 is a phosphoserine; by MARK3 (Ser-475). Disordered stretches follow at residues Arg-489–Asn-559 and Glu-614–Glu-634. Polar residues predominate over residues His-494–Asn-503. Thr-498 carries the post-translational modification Phosphothreonine. A compositionally biased stretch (low complexity) spans Ser-518–Ser-531. A compositionally biased stretch (pro residues) spans Ser-532–Gln-552. Positions Leu-667 to Leu-932 constitute a Protein kinase domain. Residue Ile-673–Val-681 coordinates ATP. The Proton donor/acceptor role is filled by Asp-787. ATP-binding residues include Lys-789 and Asp-804.

This sequence belongs to the protein kinase superfamily. TKL Ser/Thr protein kinase family. In terms of assembly, heterodimerizes (via N-terminus) with BRAF (via N-terminus) in a MAP2K1/MEK1-dependent manner. Interacts with BRAF; this increases the low intrinsic protein kinase activity of KSR2. Interacts with MAP2K1, forming a heterodimer that can dimerize to form a heterotetramer. Interacts with MAP3K8, MAPK, RAS and RAF. In terms of processing, phosphorylated on Ser-475 by MARK3.

It is found in the cytoplasm. Its subcellular location is the membrane. It catalyses the reaction L-seryl-[protein] + ATP = O-phospho-L-seryl-[protein] + ADP + H(+). The enzyme catalyses L-threonyl-[protein] + ATP = O-phospho-L-threonyl-[protein] + ADP + H(+). Its function is as follows. Location-regulated scaffold connecting MEK to RAF. Has very low protein kinase activity and can phosphorylate MAP2K1 at several Ser and Thr residues with very low efficiency (in vitro). Acts as MAP2K1/MEK1-dependent allosteric activator of BRAF; upon binding to MAP2K1/MEK1, dimerizes with BRAF and promotes BRAF-mediated phosphorylation of MAP2K1/MEK1. Interaction with BRAF enhances KSR2-mediated phosphorylation of MAP2K1 (in vitro). Blocks MAP3K8 kinase activity and MAP3K8-mediated signaling. Acts as a negative regulator of MAP3K3-mediated activation of ERK, JNK and NF-kappa-B pathways, inhibiting MAP3K3-mediated interleukin-8 production. This chain is Kinase suppressor of Ras 2, found in Mus musculus (Mouse).